Consider the following 339-residue polypeptide: UPF0324 membrane protein CPE0129 (339 aa).

8 helical membrane-spanning segments follow: residues isoleucine 12 to glycine 30, threonine 35 to phenylalanine 54, leucine 90 to isoleucine 112, tyrosine 122 to valine 144, isoleucine 156 to tyrosine 178, valine 210 to phenylalanine 232, tryptophan 259 to glycine 281, and methionine 316 to isoleucine 338.

It belongs to the UPF0324 family.

It localises to the cell membrane. This Clostridium perfringens (strain 13 / Type A) protein is UPF0324 membrane protein CPE0129.